Consider the following 539-residue polypeptide: Phosphatidylinositol 4-phosphate 5-kinase type-1 beta (539 aa).

Positions 1–21 (MSSTAENGDAVPGKQNEEKTY) are disordered. A PIPK domain is found at 25–395 (ASSAIKGAIQ…RFLKFMNSRV (371 aa)). A phosphoserine mark is found at serine 445, serine 447, and serine 448.

As to quaternary structure, interacts with RAC1, AJUBA, PLD1, PLD2 and ARF1.

Its subcellular location is the cytoplasm. It localises to the cytosol. The protein localises to the cell membrane. The protein resides in the endomembrane system. The enzyme catalyses a 1,2-diacyl-sn-glycero-3-phospho-(1D-myo-inositol 4-phosphate) + ATP = a 1,2-diacyl-sn-glycero-3-phospho-(1D-myo-inositol-4,5-bisphosphate) + ADP + H(+). The catalysed reaction is 1-octadecanoyl-2-(5Z,8Z,11Z,14Z)-eicosatetraenoyl-sn-glycero-3-phospho-1D-myo-inositol 4-phosphate + ATP = 1-octadecanoyl-2-(5Z,8Z,11Z,14Z)-eicosatetraenoyl-sn-glycero-3-phospho-1D-myo-inositol 4,5-bisphosphate + ADP + H(+). It catalyses the reaction 1-octadecanoyl-2-(9Z)-octadecenoyl-sn-glycero-3-phospho-1D-myo-inositol 4-phosphate + ATP = 1-octadecanoyl-2-(9Z)-octadecenoyl-sn-glycero-3-phospho-1D-myo-inositol 4,5-bisphosphate + ADP + H(+). It carries out the reaction 1-octadecanoyl-2-(9Z)-octadecenoyl-sn-glycero-3-phospho-1D-myo-inositol + ATP = 1-octadecanoyl-2-(9Z)-octadecenoyl-sn-glycero-3-phospho-1D-myo-inositol 5-phosphate + ADP + H(+). The enzyme catalyses 1-octadecanoyl-2-(9Z,12Z)-octadecadienoyl-sn-glycero-3-phospho-1D-myo-inositol + ATP = 1-octadecanoyl-2-(9Z,12Z)-octadecadienoyl-sn-glycero-3-phospho-1D-myo-inositol 5-phosphate + ADP + H(+). The catalysed reaction is 1-octadecanoyl-2-(5Z,8Z,11Z,14Z-eicosatetraenoyl)-sn-glycero-3-phospho-(1D-myo-inositol) + ATP = 1-octadecanoyl-2-(5Z,8Z,11Z,14Z)-eicosatetraenoyl-sn-glycero-3-phospho-1D-myo-inositol 5-phosphate + ADP + H(+). It catalyses the reaction 1,2-di-(9Z,12Z)-octadecadienoyl-sn-glycero-3-phospho-1D-myo-inositol + ATP = 1,2-di(9Z,12Z)-octadecadienoyl-sn-glycero-3-phospho-1D-myo-inositol 5-phosphate + ADP + H(+). Its function is as follows. Catalyzes the phosphorylation of phosphatidylinositol 4-phosphate (PtdIns(4)P/PI4P) to form phosphatidylinositol 4,5-bisphosphate (PtdIns(4,5)P2/PIP2), a lipid second messenger that regulates several cellular processes such as signal transduction, vesicle trafficking, actin cytoskeleton dynamics, cell adhesion, and cell motility. PtdIns(4,5)P2 can directly act as a second messenger or can be utilized as a precursor to generate other second messengers: inositol 1,4,5-trisphosphate (IP3), diacylglycerol (DAG) or phosphatidylinositol-3,4,5-trisphosphate (PtdIns(3,4,5)P3/PIP3). Mediates RAC1-dependent reorganization of actin filaments. Contributes to the activation of phospholipase PLD2. Together with PIP5K1A, is required, after stimulation by G-protein coupled receptors, for the synthesis of IP3 that will induce stable platelet adhesion. The sequence is that of Phosphatidylinositol 4-phosphate 5-kinase type-1 beta from Rattus norvegicus (Rat).